The following is a 968-amino-acid chain: RNA polymerase-associated protein RapA (968 aa).

Residues 164-334 form the Helicase ATP-binding domain; the sequence is DVGRRHAPRV…FARLRLLDPN (171 aa). 177–184 provides a ligand contact to ATP; that stretch reads DEVGLGKT. The DEAH box motif lies at 280–283; sequence DEAH. Positions 490–662 constitute a Helicase C-terminal domain; it reads RVEWLMGYLT…YLASPDQTEG (173 aa).

Belongs to the SNF2/RAD54 helicase family. RapA subfamily. In terms of assembly, interacts with the RNAP. Has a higher affinity for the core RNAP than for the holoenzyme. Its ATPase activity is stimulated by binding to RNAP.

Transcription regulator that activates transcription by stimulating RNA polymerase (RNAP) recycling in case of stress conditions such as supercoiled DNA or high salt concentrations. Probably acts by releasing the RNAP, when it is trapped or immobilized on tightly supercoiled DNA. Does not activate transcription on linear DNA. Probably not involved in DNA repair. The polypeptide is RNA polymerase-associated protein RapA (Escherichia coli O139:H28 (strain E24377A / ETEC)).